Here is a 280-residue protein sequence, read N- to C-terminus: Undecaprenyl-diphosphatase (280 aa).

Transmembrane regions (helical) follow at residues 1–21, 41–61, 87–107, 115–135, 147–167, 186–206, 225–245, and 260–280; these read MTIL…FLPV, FVRA…LVLY, FDLY…GFLF, LGSV…MLFV, ITYP…FLPG, KAAA…ATLL, IVLL…IKFF, and YRIL…SLAV.

The protein belongs to the UppP family.

The protein resides in the cell inner membrane. It catalyses the reaction di-trans,octa-cis-undecaprenyl diphosphate + H2O = di-trans,octa-cis-undecaprenyl phosphate + phosphate + H(+). Catalyzes the dephosphorylation of undecaprenyl diphosphate (UPP). Confers resistance to bacitracin. In Porphyromonas gingivalis (strain ATCC 33277 / DSM 20709 / CIP 103683 / JCM 12257 / NCTC 11834 / 2561), this protein is Undecaprenyl-diphosphatase.